A 375-amino-acid chain; its full sequence is EP300-interacting inhibitor of differentiation 3 (375 aa).

Residues 23 to 51 (AWQHLVKQEEEEAVKKEEKEEGEDEEEEG) adopt a coiled-coil conformation. A disordered region spans residues 30 to 68 (QEEEEAVKKEEKEEGEDEEEEGSDSSSDDPNPEPPCMHP). Residues 42 to 60 (EEGEDEEEEGSDSSSDDPN) show a composition bias toward acidic residues.

The protein belongs to the NSE4 family. In terms of assembly, component of the SMC5-SMC6 complex which consists at least of SMC5, SMC6, NSMCE2, NSMCE1, NSMCE4A or EID3 and NSMCE3; EID3 seems to be a testis-specific subunit. NSMCE1, NSMCE4A or EID3 and NSMCE3 probably form a subcomplex that bridges the head domains of the SMC5:SMC6 heterodimer. Homodimer, and heterodimer with EID2. Interacts with the C-terminal region of CREBBP.

It localises to the nucleus. Its subcellular location is the cytoplasm. It is found in the chromosome. The protein localises to the telomere. Tissue-specific component of the SMC5-SMC6 complex, a complex involved in repair of DNA double-strand breaks by homologous recombination. The complex may promote sister chromatid homologous recombination by recruiting the SMC1-SMC3 cohesin complex to double-strand breaks. The complex is required for telomere maintenance via recombination and mediates sumoylation of shelterin complex (telosome) components. Functionally, acts as a repressor of nuclear receptor-dependent transcription possibly by interfering with CREBBP-dependent coactivation. May function as a coinhibitor of other CREBBP/EP300-dependent transcription factors. This is EP300-interacting inhibitor of differentiation 3 from Mus musculus (Mouse).